The primary structure comprises 837 residues: A disintegrin and metalloproteinase with thrombospondin motifs 4 (837 aa).

The N-terminal stretch at 1–51 (MSQTGSHPGRGLAGRWLWGAQPCLLLPIVPLSWLVWLLLLLLASLLPSARL) is a signal peptide. A propeptide spanning residues 52 to 212 (ASPLPREEEI…PSPRPRRAKR (161 aa)) is cleaved from the precursor. Asn68 is a glycosylation site (N-linked (GlcNAc...) asparagine). Positions 192–199 (PMCNVKAP) match the Cysteine switch motif. Residue Cys194 participates in Zn(2+) binding. Residues 218–428 (RFVETLVVAD…GYGHCLLDKP (211 aa)) form the Peptidase M12B domain. 11 disulfide bridges follow: Cys293–Cys345, Cys322–Cys327, Cys339–Cys423, Cys377–Cys407, Cys449–Cys472, Cys460–Cys482, Cys467–Cys501, Cys495–Cys506, Cys532–Cys569, Cys536–Cys574, and Cys547–Cys559. Residue His361 coordinates Zn(2+). The active site involves Glu362. Residues His365 and His371 each coordinate Zn(2+). The region spanning 437–519 (TFPGKDYDAD…DQLQDFNIPQ (83 aa)) is the Disintegrin domain. Positions 520–575 (AGGWGPWGPWGDCSRTCGGGVQFSSRDCTRPVPRNGGKYCEGRRTRFRSCNTEDCP) constitute a TSP type-1 domain. The interval 686–837 (SKQSGSFRKF…LRRRPWAGRK (152 aa)) is spacer.

In terms of assembly, interacts with SRPX2. Zn(2+) serves as cofactor. In terms of processing, the precursor is cleaved by a furin endopeptidase. Glycosylated. Can be O-fucosylated by POFUT2 on a serine or a threonine residue found within the consensus sequence C1-X(2)-(S/T)-C2-G of the TSP type-1 repeat domains where C1 and C2 are the first and second cysteine residue of the repeat, respectively. Fucosylated repeats can then be further glycosylated by the addition of a beta-1,3-glucose residue by the glucosyltransferase, B3GALTL. Fucosylation mediates the efficient secretion of ADAMTS family members. Can also be C-glycosylated with one or two mannose molecules on tryptophan residues within the consensus sequence W-X-X-W of the TPRs, and N-glycosylated. These other glycosylations can also facilitate secretion. As to expression, expressed in brain, lung and heart. Expressed at very low level in placenta and skeletal muscles. Isoform 2: Detected in osteoarthritic synovium.

It is found in the secreted. The protein localises to the extracellular space. Its subcellular location is the extracellular matrix. The catalysed reaction is Glutamyl endopeptidase. Bonds cleaved include 370-Thr-Glu-Gly-Glu-|-Ala-Arg-Gly-Ser-377 in the interglobular domain of mammalian aggrecan.. Its function is as follows. Cleaves aggrecan, a cartilage proteoglycan, at the '392-Glu-|-Ala-393' site and may be involved in its turnover. Also cleaves COMP. May play an important role in the destruction of aggrecan in arthritic diseases. Could be a critical factor in the exacerbation of neurodegeneration in Alzheimer disease. This chain is A disintegrin and metalloproteinase with thrombospondin motifs 4 (ADAMTS4), found in Homo sapiens (Human).